The primary structure comprises 365 residues: Flagellar P-ring protein (365 aa).

The N-terminal stretch at 1-19 (MIKFLSALILLLVTTAAQA) is a signal peptide.

This sequence belongs to the FlgI family. As to quaternary structure, the basal body constitutes a major portion of the flagellar organelle and consists of four rings (L,P,S, and M) mounted on a central rod.

Its subcellular location is the periplasm. The protein resides in the bacterial flagellum basal body. In terms of biological role, assembles around the rod to form the L-ring and probably protects the motor/basal body from shearing forces during rotation. The polypeptide is Flagellar P-ring protein (Escherichia coli O9:H4 (strain HS)).